The following is a 98-amino-acid chain: Large ribosomal subunit protein uL23 (98 aa).

The protein belongs to the universal ribosomal protein uL23 family. In terms of assembly, part of the 50S ribosomal subunit. Contacts protein L29, and trigger factor when it is bound to the ribosome.

In terms of biological role, one of the early assembly proteins it binds 23S rRNA. One of the proteins that surrounds the polypeptide exit tunnel on the outside of the ribosome. Forms the main docking site for trigger factor binding to the ribosome. This Parafrankia sp. (strain EAN1pec) protein is Large ribosomal subunit protein uL23.